The following is a 301-amino-acid chain: 3-methyl-2-oxobutanoate hydroxymethyltransferase (301 aa).

Low complexity predominate over residues 1–28 (MATSNSSDSSMSAEVPAPYGNGPANAPA). The interval 1–37 (MATSNSSDSSMSAEVPAPYGNGPANAPATPSDTAKKP) is disordered. D82 and D121 together coordinate Mg(2+). 3-methyl-2-oxobutanoate is bound by residues 82–83 (DS), D121, and K151. E153 provides a ligand contact to Mg(2+). E219 functions as the Proton acceptor in the catalytic mechanism.

This sequence belongs to the PanB family. In terms of assembly, homodecamer; pentamer of dimers. It depends on Mg(2+) as a cofactor.

The protein localises to the cytoplasm. It carries out the reaction 3-methyl-2-oxobutanoate + (6R)-5,10-methylene-5,6,7,8-tetrahydrofolate + H2O = 2-dehydropantoate + (6S)-5,6,7,8-tetrahydrofolate. It participates in cofactor biosynthesis; (R)-pantothenate biosynthesis; (R)-pantoate from 3-methyl-2-oxobutanoate: step 1/2. Its function is as follows. Catalyzes the reversible reaction in which hydroxymethyl group from 5,10-methylenetetrahydrofolate is transferred onto alpha-ketoisovalerate to form ketopantoate. The chain is 3-methyl-2-oxobutanoate hydroxymethyltransferase from Arthrobacter sp. (strain FB24).